A 414-amino-acid polypeptide reads, in one-letter code: Nuclear pore complex-interacting protein family member B7 (414 aa).

The N-terminal stretch at 1-18 is a signal peptide; it reads MRLRFWLLIWLLLGFISH. A glycan (N-linked (GlcNAc...) asparagine) is linked at N111. Disordered regions lie at residues 242–262 and 335–402; these read RMGR…NSLS and SPLP…LRTR. A compositionally biased stretch (polar residues) spans 252–262; that stretch reads QQHSITDNSLS. Basic and acidic residues predominate over residues 356-384; that stretch reads EVEKPPKPKRWRVDEVEQSPKPKRQREAE. Residues 390-402 show a composition bias toward basic residues; sequence KPKRRRLSKLRTR.

It belongs to the NPIP family.

Its subcellular location is the secreted. This is Nuclear pore complex-interacting protein family member B7 (NPIPB7) from Homo sapiens (Human).